The primary structure comprises 154 residues: Probable archaeosortase D (154 aa).

Transmembrane regions (helical) follow at residues 6–26, 57–77, 91–111, and 125–145; these read AIYILRFLIYFFIFYYILKML, IIEISSPCTCSLEMALFLGYI, YSVFGLSIITISNILRIILII, and VISFIIFPIALFLNWFWIYLL. The active-site Acyl-thioester intermediate is the Cys64. Residue Arg106 is the Proton donor of the active site.

It belongs to the exosortase/archaeosortase family. Archaeosortase D subfamily.

The protein localises to the cell membrane. Functionally, transpeptidase that recognizes and modifies its substrate by proteolytic cleavage of a sorting signal. Following cleavage, a covalent intermediate is formed via a thioester bond between the archaeosortase and its substrate, which is then transferred and covalently attached to the cell membrane. The sequence is that of Probable archaeosortase D from Methanocaldococcus jannaschii (strain ATCC 43067 / DSM 2661 / JAL-1 / JCM 10045 / NBRC 100440) (Methanococcus jannaschii).